We begin with the raw amino-acid sequence, 366 residues long: Flagellar P-ring protein (366 aa).

Residues 1 to 20 (MVIKFLSALILLLVTTAAQA) form the signal peptide.

This sequence belongs to the FlgI family. As to quaternary structure, the basal body constitutes a major portion of the flagellar organelle and consists of four rings (L,P,S, and M) mounted on a central rod.

The protein resides in the periplasm. Its subcellular location is the bacterial flagellum basal body. Its function is as follows. Assembles around the rod to form the L-ring and probably protects the motor/basal body from shearing forces during rotation. This is Flagellar P-ring protein from Escherichia coli O1:K1 / APEC.